We begin with the raw amino-acid sequence, 431 residues long: Enolase (431 aa).

Gln-168 is a (2R)-2-phosphoglycerate binding site. Glu-210 functions as the Proton donor in the catalytic mechanism. Asp-247, Glu-291, and Asp-318 together coordinate Mg(2+). 4 residues coordinate (2R)-2-phosphoglycerate: Lys-343, Arg-372, Ser-373, and Lys-394. Lys-343 acts as the Proton acceptor in catalysis.

This sequence belongs to the enolase family. Component of the RNA degradosome, a multiprotein complex involved in RNA processing and mRNA degradation. Mg(2+) is required as a cofactor.

It localises to the cytoplasm. The protein resides in the secreted. Its subcellular location is the cell surface. It catalyses the reaction (2R)-2-phosphoglycerate = phosphoenolpyruvate + H2O. Its pathway is carbohydrate degradation; glycolysis; pyruvate from D-glyceraldehyde 3-phosphate: step 4/5. Functionally, catalyzes the reversible conversion of 2-phosphoglycerate (2-PG) into phosphoenolpyruvate (PEP). It is essential for the degradation of carbohydrates via glycolysis. This chain is Enolase, found in Acinetobacter baylyi (strain ATCC 33305 / BD413 / ADP1).